We begin with the raw amino-acid sequence, 144 residues long: D-aminoacyl-tRNA deacylase (144 aa).

Residues 136–137 (GP) carry the Gly-cisPro motif, important for rejection of L-amino acids motif.

The protein belongs to the DTD family. Homodimer.

The protein localises to the cytoplasm. It carries out the reaction glycyl-tRNA(Ala) + H2O = tRNA(Ala) + glycine + H(+). It catalyses the reaction a D-aminoacyl-tRNA + H2O = a tRNA + a D-alpha-amino acid + H(+). In terms of biological role, an aminoacyl-tRNA editing enzyme that deacylates mischarged D-aminoacyl-tRNAs. Also deacylates mischarged glycyl-tRNA(Ala), protecting cells against glycine mischarging by AlaRS. Acts via tRNA-based rather than protein-based catalysis; rejects L-amino acids rather than detecting D-amino acids in the active site. By recycling D-aminoacyl-tRNA to D-amino acids and free tRNA molecules, this enzyme counteracts the toxicity associated with the formation of D-aminoacyl-tRNA entities in vivo and helps enforce protein L-homochirality. This is D-aminoacyl-tRNA deacylase from Haemophilus influenzae (strain ATCC 51907 / DSM 11121 / KW20 / Rd).